The chain runs to 1565 residues: Synemin (1565 aa).

A head region spans residues 1 to 10 (MLSWRLQTGP). A coil 1A region spans residues 11-49 (EKAELQELNARLYDYVCRVRELERENLLLEEELRGRRGR). Positions 11-320 (EKAELQELNA…YRALLEGESN (310 aa)) are interaction with DMD and UTRN. The region spanning 11–322 (EKAELQELNA…ALLEGESNPE (312 aa)) is the IF rod domain. Positions 50 to 58 (EGLWAEGQA) are linker 1. Residues 59-163 (RCAEEARSLR…ELRARAASLT (105 aa)) are coil 1B. Residues 164–186 (MHFRARATGPAAPPPRLREVHDS) form a linker 12 region. The segment at 187–300 (YALLVAESWR…LRDYQDLLQV (114 aa)) is coil 2. A tail region spans residues 301-1565 (KTGLSLEVAT…EEEENDGHWF (1265 aa)). A disordered region spans residues 401–421 (SGYSSSATTQQENSYGKAVSS). The segment covering 402–421 (GYSSSATTQQENSYGKAVSS) has biased composition (polar residues). The residue at position 429 (Ser429) is a Phosphoserine. The segment at 472-609 (YRDRRDKVAA…VKDAGGGTGR (138 aa)) is disordered. Over residues 498–577 (KKTEVKATRE…KEKSVREREV (80 aa)) the composition is skewed to basic and acidic residues. Phosphothreonine occurs at positions 598 and 651. Phosphoserine occurs at positions 653 and 777. Residues 1019–1040 (LSKDEASEMEKAVESVVRESLS) are compositionally biased toward basic and acidic residues. Residues 1019–1060 (LSKDEASEMEKAVESVVRESLSRQRSPAPGSPDEEGGAEAPA) form a disordered region. Phosphoserine occurs at positions 1044, 1049, 1077, 1087, 1181, and 1184. The tract at residues 1080–1105 (SEVAGGASHSSGQRTPQGPVSATVEV) is disordered. The span at 1087 to 1105 (SHSSGQRTPQGPVSATVEV) shows a compositional bias: polar residues. The interaction with TLN1 and VCL stretch occupies residues 1152-1463 (VSAGGDLSQA…GPKETSFTFQ (312 aa)). Disordered stretches follow at residues 1198 to 1221 (EAWGSPEPGPAESSADMDGSGRHS) and 1332 to 1415 (QLGE…ETSE). Residues 1244–1563 (GKVGDYFATE…DNEEEENDGH (320 aa)) form an interaction with DMD and UTRN region. The segment covering 1354–1379 (ATHSHTSGRQTVMTEKSTFQSVVSES) has biased composition (polar residues). Ser1435 is modified (phosphoserine). Arg1487 bears the Omega-N-methylarginine mark. The disordered stretch occupies residues 1505–1525 (FKASAGEGDQAHREQGKEQAM). The segment covering 1513–1525 (DQAHREQGKEQAM) has biased composition (basic and acidic residues).

This sequence belongs to the intermediate filament family. As to quaternary structure, interacts with GFAP and VIM. Isoform 1 interacts with TLN1 and VCL. Isoform 2 interacts with DES and DTNA. Isoform 1 and isoform 2 interact with DMD and UTRN. Isoform 2 is strongly detected in adult heart, fetal skeletal muscles and fetal heart. Isoform 1 is weakly detected in fetal heart and also in fetal skeletal muscle. Isoform 1 and isoform 2 are detected in adult bladder (at protein level). The mRNA is predominantly expressed in heart and muscle with some expression in brain which may be due to tissue-specific isoforms.

The protein resides in the cytoplasm. Its subcellular location is the cytoskeleton. The protein localises to the cell junction. It is found in the adherens junction. Its function is as follows. Type-VI intermediate filament (IF) which plays an important cytoskeletal role within the muscle cell cytoskeleton. It forms heteromeric IFs with desmin and/or vimentin, and via its interaction with cytoskeletal proteins alpha-dystrobrevin, dystrophin, talin-1, utrophin and vinculin, is able to link these heteromeric IFs to adherens-type junctions, such as to the costameres, neuromuscular junctions, and myotendinous junctions within striated muscle cells. The protein is Synemin of Homo sapiens (Human).